A 168-amino-acid chain; its full sequence is Large ribosomal subunit protein uL10 (168 aa).

Belongs to the universal ribosomal protein uL10 family. Part of the ribosomal stalk of the 50S ribosomal subunit. The N-terminus interacts with L11 and the large rRNA to form the base of the stalk. The C-terminus forms an elongated spine to which L12 dimers bind in a sequential fashion forming a multimeric L10(L12)X complex.

Forms part of the ribosomal stalk, playing a central role in the interaction of the ribosome with GTP-bound translation factors. The sequence is that of Large ribosomal subunit protein uL10 from Clostridium acetobutylicum (strain ATCC 824 / DSM 792 / JCM 1419 / IAM 19013 / LMG 5710 / NBRC 13948 / NRRL B-527 / VKM B-1787 / 2291 / W).